A 148-amino-acid chain; its full sequence is Small ribosomal subunit protein uS13 (148 aa).

This sequence belongs to the universal ribosomal protein uS13 family. As to quaternary structure, part of the 30S ribosomal subunit. Forms a loose heterodimer with protein S19. Forms two bridges to the 50S subunit in the 70S ribosome.

Its function is as follows. Located at the top of the head of the 30S subunit, it contacts several helices of the 16S rRNA. In the 70S ribosome it contacts the 23S rRNA (bridge B1a) and protein L5 of the 50S subunit (bridge B1b), connecting the 2 subunits; these bridges are implicated in subunit movement. This chain is Small ribosomal subunit protein uS13, found in Pyrococcus abyssi (strain GE5 / Orsay).